Reading from the N-terminus, the 332-residue chain is Homoarginine-6-hydroxylase 2-ODD-C23.1 (332 aa).

The 106-residue stretch at 182–287 folds into the Fe2OG dioxygenase domain; sequence PFWVMRLIGY…RVCVAFFYET (106 aa). Residues His210, Asp212, and His268 each coordinate Fe cation. Arg278 contacts 2-oxoglutarate.

This sequence belongs to the iron/ascorbate-dependent oxidoreductase family. Requires Fe(2+) as cofactor.

The protein localises to the cytoplasm. It is found in the cytosol. The catalysed reaction is L-homoarginine + 2-oxoglutarate + O2 = 6-hydroxy-L-homoarginine + succinate + CO2. Slightly inhibited by canavanine (Can), the 5-oxa-analog of arginine. 2-oxoglutarate-dependent dioxygenase catalyzing homoarginine 6-hydroxylation thus producing 6-hydroxy-L-homoarginine. Guanidine (Gd) is in turn synthesized by the spontaneous conversion of 6-hydroxy-L-homoarginine to (S)-2-amino-6-oxohexanoate (RHEA:79843); guanidine is a nitrogen-rich compound that can serve as a defense or signaling substance. This Arabidopsis thaliana (Mouse-ear cress) protein is Homoarginine-6-hydroxylase 2-ODD-C23.1.